Reading from the N-terminus, the 178-residue chain is Large ribosomal subunit protein uL6 (178 aa).

This sequence belongs to the universal ribosomal protein uL6 family. In terms of assembly, part of the 50S ribosomal subunit.

Functionally, this protein binds to the 23S rRNA, and is important in its secondary structure. It is located near the subunit interface in the base of the L7/L12 stalk, and near the tRNA binding site of the peptidyltransferase center. The chain is Large ribosomal subunit protein uL6 from Limosilactobacillus reuteri (strain DSM 20016) (Lactobacillus reuteri).